We begin with the raw amino-acid sequence, 661 residues long: Kyphoscoliosis peptidase (661 aa).

Residues 116-137 (GDKNGNMRPRQPGGKDAHAYPW) form a disordered region. Active-site residues include C225, H267, and D282.

This sequence belongs to the transglutaminase-like superfamily. In terms of assembly, interacts with IGFN1 and FLNC. In terms of tissue distribution, specifically expressed in skeletal and cardiac muscle.

It localises to the cytoplasm. The protein resides in the cytoskeleton. It is found in the myofibril. Its subcellular location is the sarcomere. The protein localises to the z line. Probable cytoskeleton-associated protease required for normal muscle growth. Involved in function, maturation and stabilization of the neuromuscular junction. May act by cleaving muscle-specific proteins such as FLNC. The sequence is that of Kyphoscoliosis peptidase from Mus musculus (Mouse).